The primary structure comprises 206 residues: Purine nucleoside phosphorylase aq_167 (206 aa).

Residues His-42, Cys-78, and His-93 each contribute to the Zn(2+) site.

This sequence belongs to the purine nucleoside phosphorylase YfiH/LACC1 family. As to quaternary structure, homodimer. Requires Cu(2+) as cofactor. Zn(2+) serves as cofactor.

It catalyses the reaction adenosine + phosphate = alpha-D-ribose 1-phosphate + adenine. It carries out the reaction S-methyl-5'-thioadenosine + phosphate = 5-(methylsulfanyl)-alpha-D-ribose 1-phosphate + adenine. The enzyme catalyses inosine + phosphate = alpha-D-ribose 1-phosphate + hypoxanthine. The catalysed reaction is adenosine + H2O + H(+) = inosine + NH4(+). Purine nucleoside enzyme that catalyzes the phosphorolysis of adenosine and inosine nucleosides, yielding D-ribose 1-phosphate and the respective free bases, adenine and hypoxanthine. Also catalyzes the phosphorolysis of S-methyl-5'-thioadenosine into adenine and S-methyl-5-thio-alpha-D-ribose 1-phosphate. Also has adenosine deaminase activity. The protein is Purine nucleoside phosphorylase aq_167 of Aquifex aeolicus (strain VF5).